The sequence spans 571 residues: MSFKMTQSQYTSLYGPTVGDSVRLGDTNLFARVERDYATYGDEAAFGGGKSIRDGMAQNPNVTRDDKQVADLVITNAMIIDYDKIVKADIGVKNGYIMKIGKAGNPDIMDNVDIIIGATTDIISAEGKIVTAGGIDTHVHFINPEQSQVALESGITTHIGGGTGASEGTKATTVTPGPWHLHRMLLAAESLPLNIGFTGKGQAVNHTALVEQIHAGAIGLKVHEDWGATPSALDHALQVADDYDVQIALHADTLNEAGFMEETMAAVKDRVLHMYHTEGAGGGHAPDLIKSAAYANILPSSTNPTLPYTVNTIDEHLDMVMITHHLNASIPEDIAFADSRIRKETIAAEDVLQDMGVFSMVSSDSQAMGRVGEVITRTWQVAHRMKEQRGLLDGDSEYNDNNRIKRYIAKYTINPAITHGISDYVGSIDEGKLADIILWEPAFFGVKPDVIVKGGLINAAINGDANGSIPTSEPLKYRKMYGQLGGNLQSTSMTFVSTTAYENDIGKLLGLKRKLRPVHNIRKLSKKDMKNNNATPDLDVDPQTYEVFVDGEKITSEPATELPLTQRYFLF.

In terms of domain architecture, Urease spans 133–571 (GGIDTHVHFI…LPLTQRYFLF (439 aa)). 3 residues coordinate Ni(2+): H138, H140, and K221. An N6-carboxylysine modification is found at K221. Substrate is bound at residue H223. Ni(2+) is bound by residues H250 and H276. The Proton donor role is filled by H324. D364 contacts Ni(2+).

This sequence belongs to the metallo-dependent hydrolases superfamily. Urease alpha subunit family. In terms of assembly, heterotrimer of UreA (gamma), UreB (beta) and UreC (alpha) subunits. Three heterotrimers associate to form the active enzyme. The cofactor is Ni cation. Post-translationally, carboxylation allows a single lysine to coordinate two nickel ions.

The protein resides in the cytoplasm. It carries out the reaction urea + 2 H2O + H(+) = hydrogencarbonate + 2 NH4(+). It functions in the pathway nitrogen metabolism; urea degradation; CO(2) and NH(3) from urea (urease route): step 1/1. The polypeptide is Urease subunit alpha (Staphylococcus saprophyticus subsp. saprophyticus (strain ATCC 15305 / DSM 20229 / NCIMB 8711 / NCTC 7292 / S-41)).